The chain runs to 584 residues: Long-chain-fatty-acid--AMP ligase FadD26 (584 aa).

This sequence belongs to the ATP-dependent AMP-binding enzyme family.

The catalysed reaction is holo-[(phenol)carboxyphthiodiolenone synthase] + a long-chain fatty acid + ATP = a long-chain fatty acyl-[(phenol)carboxyphthiodiolenone synthase] + AMP + diphosphate. It carries out the reaction eicosanoate + holo-[(phenol)carboxyphthiodiolenone synthase] + ATP = icosanoyl-[(phenol)carboxyphthiodiolenone synthase] + AMP + diphosphate. The enzyme catalyses holo-[(phenol)carboxyphthiodiolenone synthase] + docosanoate + ATP = docosanoyl-[(phenol)carboxyphthiodiolenone synthase] + AMP + diphosphate. The protein operates within lipid metabolism; fatty acid biosynthesis. In terms of biological role, catalyzes the activation of long-chain fatty acids as acyl-adenylates (acyl-AMP), which are then transferred to the multifunctional polyketide synthase PpsA for further chain extension. Catalyzes the adenylation of the long-chain fatty acids eicosanoate (C20) or docosanoate (C22), and potentially the very-long-chain fatty acid lignocerate (C24). Involved in the biosynthesis of phthiocerol dimycocerosate (DIM A) and phthiodiolone dimycocerosate (DIM B). The sequence is that of Long-chain-fatty-acid--AMP ligase FadD26 from Mycobacterium marinum (strain ATCC BAA-535 / M).